Reading from the N-terminus, the 591-residue chain is Homeobox domain-containing transcription factor HOB1 (591 aa).

Basic and acidic residues predominate over residues 1-15 (MEGKNEDMHTPRGPE). 2 disordered regions span residues 1-37 (MEGKNEDMHTPRGPEDASNIADEYPSPERQQQGDMLG) and 148-168 (IAGPSTLRRSPLPDTFSRSPA). The segment at residues 176 to 223 (IAILRESYARNPNPDRKELERLAARTGRPWNKIREYFRQRRNKLRGLE) is a DNA-binding region (homeobox). 2 disordered regions span residues 420 to 463 (DAGL…PRES) and 543 to 563 (DAIERRNAGESKRKRDDALTE). A compositionally biased stretch (acidic residues) spans 427 to 441 (QGEEDQPPTVEESDQ). Residues 543–560 (DAIERRNAGESKRKRDDA) show a composition bias toward basic and acidic residues.

It localises to the nucleus. General stress-responsive transcription factor that governs multiple stress responses and adaptations. Plays a key role in virulence. Mediates the expression of LAC1, which is the major laccase involved in melanin synthesis. Positively regulates BZP4 induction under conditions of nutrient starvation and basal expression levels of MBS1 and USV101, 3 major transcription factors that independently contribute to melanin production. Also acts as a key regulator of ergosterol gene expression. In Cryptococcus neoformans var. grubii serotype A (strain H99 / ATCC 208821 / CBS 10515 / FGSC 9487) (Filobasidiella neoformans var. grubii), this protein is Homeobox domain-containing transcription factor HOB1.